We begin with the raw amino-acid sequence, 341 residues long: tRNA N6-adenosine threonylcarbamoyltransferase (341 aa).

Residues histidine 111 and histidine 115 each contribute to the Fe cation site. Residues 134–138, aspartate 167, glycine 180, and asparagine 276 contribute to the substrate site; that span reads LVSGG. Aspartate 304 contacts Fe cation.

It belongs to the KAE1 / TsaD family. Fe(2+) serves as cofactor.

The protein localises to the cytoplasm. The catalysed reaction is L-threonylcarbamoyladenylate + adenosine(37) in tRNA = N(6)-L-threonylcarbamoyladenosine(37) in tRNA + AMP + H(+). Functionally, required for the formation of a threonylcarbamoyl group on adenosine at position 37 (t(6)A37) in tRNAs that read codons beginning with adenine. Is involved in the transfer of the threonylcarbamoyl moiety of threonylcarbamoyl-AMP (TC-AMP) to the N6 group of A37, together with TsaE and TsaB. TsaD likely plays a direct catalytic role in this reaction. In Pseudomonas entomophila (strain L48), this protein is tRNA N6-adenosine threonylcarbamoyltransferase.